The chain runs to 436 residues: uncharacterized protein (436 aa).

The signal sequence occupies residues 1–19; the sequence is MKKLLLASIIGLASTTSFA.

This is an uncharacterized protein from Rickettsia bellii (strain RML369-C).